A 151-amino-acid chain; its full sequence is HTH-type transcriptional regulator FL11 (151 aa).

The 62-residue stretch at 5–66 (LDEIDRRIIK…IVNPEALGYS (62 aa)) folds into the HTH asnC-type domain. A DNA-binding region (H-T-H motif) is located at residues 24–43 (LREISKITGLAESTIHERIK). 98–104 (ETTGDYD) is a binding site for L-arginine. L-lysine is bound by residues N118, D122, and 133-135 (THT). L-arginine is bound by residues D122 and 133 to 135 (THT).

In terms of assembly, homodimer. Binds DNA as a dimer and an octamer.

With respect to regulation, in the famine mode, FL11 forms dimers and acts as a repressor, leading to growth arrest. In the feast mode, in the presence of high concentrations of lysine or arginine, four dimers assemble into an octamer and cover the fl11 and lysine biosynthesis promoters. This leads to the inhibition of fl11 expression and lysine biosynthesis, decrease of the FL11 concentration in the cell, derepression of the target genes and activation of the metabolism. In terms of biological role, DNA-binding protein involved in the repression of transcription of a large number of genes, thereby arresting growth, in response to environmental changes. The sequence is that of HTH-type transcriptional regulator FL11 from Pyrococcus abyssi (strain GE5 / Orsay).